A 430-amino-acid chain; its full sequence is Delta(14)-sterol reductase (430 aa).

6 consecutive transmembrane segments (helical) span residues 12-32 (IGTG…HFLI), 67-87 (LAVA…PAEI), 109-129 (FLVF…TWWF), 230-250 (FVSD…VDAL), 267-287 (LGVM…CLQA), and 290-310 (LASF…AVQF). Residues Lys323, Arg327, Leu350, Trp355, and 362-363 (NY) each bind NADP(+). 2 helical membrane passes run 349 to 369 (LLIS…DWIM) and 376 to 396 (TTGF…ILLL). NADP(+)-binding positions include Asp402, 406 to 410 (CREKY), and Tyr417.

It belongs to the ERG4/ERG24 family.

Its subcellular location is the membrane. The enzyme catalyses 4,4-dimethyl-5alpha-cholesta-8,24-dien-3beta-ol + NADP(+) = 4,4-dimethyl-5alpha-cholesta-8,14,24-trien-3beta-ol + NADPH + H(+). It participates in steroid biosynthesis; zymosterol biosynthesis; zymosterol from lanosterol: step 2/6. Functionally, reduces the C14=C15 double bond of 4,4-dimethyl-cholesta-8,14,24-trienol to produce 4,4-dimethyl-cholesta-8,24-dienol. In Ascobolus immersus, this protein is Delta(14)-sterol reductase (ERG3).